The sequence spans 164 residues: Cytochrome c-type biogenesis protein CcmE (164 aa).

The Cytoplasmic segment spans residues 1–7; the sequence is MTRKQRR. Residues 8–28 traverse the membrane as a helical; Signal-anchor for type II membrane protein segment; that stretch reads LLMIGGAGVVLVVAVGLVLNA. The Periplasmic segment spans residues 29 to 164; sequence MRGSIVFFST…ASADAAGPSR (136 aa). Heme is bound by residues histidine 122 and tyrosine 126. Residues 137–149 are compositionally biased toward basic and acidic residues; the sequence is KQGHWKDDYEKKP. Residues 137–164 are disordered; it reads KQGHWKDDYEKKPPGAPGASADAAGPSR. Low complexity predominate over residues 153-164; that stretch reads PGASADAAGPSR.

The protein belongs to the CcmE/CycJ family.

The protein localises to the cell inner membrane. Functionally, heme chaperone required for the biogenesis of c-type cytochromes. Transiently binds heme delivered by CcmC and transfers the heme to apo-cytochromes in a process facilitated by CcmF and CcmH. This chain is Cytochrome c-type biogenesis protein CcmE, found in Rhodopseudomonas palustris (strain BisB5).